The sequence spans 443 residues: Probable D-serine dehydratase (443 aa).

N6-(pyridoxal phosphate)lysine is present on Lys106.

Belongs to the serine/threonine dehydratase family. DsdA subfamily. It depends on pyridoxal 5'-phosphate as a cofactor.

It carries out the reaction D-serine = pyruvate + NH4(+). The chain is Probable D-serine dehydratase from Cupriavidus pinatubonensis (strain JMP 134 / LMG 1197) (Cupriavidus necator (strain JMP 134)).